Reading from the N-terminus, the 268-residue chain is Putative pyruvate, phosphate dikinase regulatory protein (268 aa).

Residue 147–154 (GLSRTSKT) participates in ADP binding.

This sequence belongs to the pyruvate, phosphate/water dikinase regulatory protein family. PDRP subfamily.

The enzyme catalyses N(tele)-phospho-L-histidyl/L-threonyl-[pyruvate, phosphate dikinase] + ADP = N(tele)-phospho-L-histidyl/O-phospho-L-threonyl-[pyruvate, phosphate dikinase] + AMP + H(+). It carries out the reaction N(tele)-phospho-L-histidyl/O-phospho-L-threonyl-[pyruvate, phosphate dikinase] + phosphate + H(+) = N(tele)-phospho-L-histidyl/L-threonyl-[pyruvate, phosphate dikinase] + diphosphate. Its function is as follows. Bifunctional serine/threonine kinase and phosphorylase involved in the regulation of the pyruvate, phosphate dikinase (PPDK) by catalyzing its phosphorylation/dephosphorylation. The chain is Putative pyruvate, phosphate dikinase regulatory protein from Clostridium beijerinckii (strain ATCC 51743 / NCIMB 8052) (Clostridium acetobutylicum).